The primary structure comprises 689 residues: Elongation factor G (689 aa).

The 275-residue stretch at A9–L283 folds into the tr-type G domain. GTP-binding positions include A18–T25, D82–H86, and N136–D139.

It belongs to the TRAFAC class translation factor GTPase superfamily. Classic translation factor GTPase family. EF-G/EF-2 subfamily.

It localises to the cytoplasm. Its function is as follows. Catalyzes the GTP-dependent ribosomal translocation step during translation elongation. During this step, the ribosome changes from the pre-translocational (PRE) to the post-translocational (POST) state as the newly formed A-site-bound peptidyl-tRNA and P-site-bound deacylated tRNA move to the P and E sites, respectively. Catalyzes the coordinated movement of the two tRNA molecules, the mRNA and conformational changes in the ribosome. This Clostridium botulinum (strain 657 / Type Ba4) protein is Elongation factor G.